Consider the following 351-residue polypeptide: Phosphate acyltransferase (351 aa).

The protein belongs to the PlsX family. Homodimer. Probably interacts with PlsY.

The protein resides in the cytoplasm. It carries out the reaction a fatty acyl-[ACP] + phosphate = an acyl phosphate + holo-[ACP]. The protein operates within lipid metabolism; phospholipid metabolism. In terms of biological role, catalyzes the reversible formation of acyl-phosphate (acyl-PO(4)) from acyl-[acyl-carrier-protein] (acyl-ACP). This enzyme utilizes acyl-ACP as fatty acyl donor, but not acyl-CoA. This Verminephrobacter eiseniae (strain EF01-2) protein is Phosphate acyltransferase.